The primary structure comprises 625 residues: DELLA protein SLR1 (625 aa).

A disordered region spans residues Met-1 to Glu-34. Residues Asp-39 to Ala-43 carry the DELLA motif motif. Residues Thr-167 to Val-208 are disordered. Residues Thr-189–Ser-198 are compositionally biased toward low complexity. Residues Val-232–Arg-621 form the GRAS domain. Residues Ile-239–Tyr-294 form a leucine repeat I (LRI) region. A required for possible homodimerization region spans residues Leu-241–Met-278. The short motif at Leu-246–Glu-250 is the LxCxE motif element. The tract at residues His-313–Gly-378 is VHIID. A VHIID motif is present at residues Val-344–Asp-348. The segment at Gln-392–Glu-431 is leucine repeat II (LRII). The PFYRE stretch occupies residues Ile-441–Asn-542. The LXXLL motif motif lies at Leu-449–Leu-453. Positions Ala-545 to Arg-621 are SAW.

The protein belongs to the GRAS family. DELLA subfamily.

In terms of biological role, probable transcriptional regulator that acts as a repressor of the gibberellin (GA) signaling pathway. Probably acts by participating in large multiprotein complexes that repress transcription of GA-inducible genes. Upon GA application, it is degraded by the proteasome, allowing the GA signaling pathway. In contrast, its overexpression prevents the GA signaling pathway and induces a dwarf phenotype. This is DELLA protein SLR1 from Oryza sativa subsp. indica (Rice).